A 306-amino-acid chain; its full sequence is UDP-N-acetylenolpyruvoylglucosamine reductase (306 aa).

Residues 34–198 form the FAD-binding PCMH-type domain; that stretch reads VGGPADLLIT…LEVTFKLHNS (165 aa). Residue R177 is part of the active site. Residue S227 is the Proton donor of the active site. E297 is an active-site residue.

Belongs to the MurB family. It depends on FAD as a cofactor.

It localises to the cytoplasm. The catalysed reaction is UDP-N-acetyl-alpha-D-muramate + NADP(+) = UDP-N-acetyl-3-O-(1-carboxyvinyl)-alpha-D-glucosamine + NADPH + H(+). Its pathway is cell wall biogenesis; peptidoglycan biosynthesis. Functionally, cell wall formation. This Clostridium botulinum (strain Langeland / NCTC 10281 / Type F) protein is UDP-N-acetylenolpyruvoylglucosamine reductase.